The primary structure comprises 147 residues: 3-dehydroquinate dehydratase (147 aa).

The active-site Proton acceptor is Y25. N76, H82, and D89 together coordinate substrate. H102 functions as the Proton donor in the catalytic mechanism. Residues 103 to 104 (LS) and R113 contribute to the substrate site.

Belongs to the type-II 3-dehydroquinase family. Homododecamer.

The catalysed reaction is 3-dehydroquinate = 3-dehydroshikimate + H2O. The protein operates within metabolic intermediate biosynthesis; chorismate biosynthesis; chorismate from D-erythrose 4-phosphate and phosphoenolpyruvate: step 3/7. Functionally, catalyzes a trans-dehydration via an enolate intermediate. The protein is 3-dehydroquinate dehydratase of Nostoc sp. (strain PCC 7120 / SAG 25.82 / UTEX 2576).